A 474-amino-acid polypeptide reads, in one-letter code: Trehalose-6-phosphate synthase (474 aa).

Residue Arg-10 participates in D-glucose 6-phosphate binding. A UDP-alpha-D-glucose-binding site is contributed by 22 to 23; sequence GG. D-glucose 6-phosphate-binding residues include Tyr-77 and Asp-131. UDP-alpha-D-glucose contacts are provided by Arg-263 and Lys-268. D-glucose 6-phosphate is bound at residue Arg-301. UDP-alpha-D-glucose is bound by residues Phe-340 and 366 to 370; that span reads LVAKE.

Belongs to the glycosyltransferase 20 family. As to quaternary structure, homotetramer.

It catalyses the reaction D-glucose 6-phosphate + UDP-alpha-D-glucose = alpha,alpha-trehalose 6-phosphate + UDP + H(+). It participates in glycan biosynthesis; trehalose biosynthesis. Functionally, probably involved in the osmoprotection via the biosynthesis of trehalose. Catalyzes the transfer of glucose from UDP-alpha-D-glucose (UDP-Glc) to D-glucose 6-phosphate (Glc-6-P) to form trehalose-6-phosphate. Acts with retention of the anomeric configuration of the UDP-sugar donor. The chain is Trehalose-6-phosphate synthase from Klebsiella pneumoniae subsp. pneumoniae (strain ATCC 700721 / MGH 78578).